The sequence spans 90 residues: Small ribosomal subunit protein bS18A (90 aa).

This sequence belongs to the bacterial ribosomal protein bS18 family. As to quaternary structure, part of the 30S ribosomal subunit. Forms a tight heterodimer with protein bS6.

Its function is as follows. Binds as a heterodimer with protein bS6 to the central domain of the 16S rRNA, where it helps stabilize the platform of the 30S subunit. In Roseiflexus castenholzii (strain DSM 13941 / HLO8), this protein is Small ribosomal subunit protein bS18A.